The primary structure comprises 503 residues: ATP synthase subunit alpha (503 aa).

169–176 (GDRKTGKT) provides a ligand contact to ATP.

Belongs to the ATPase alpha/beta chains family. F-type ATPases have 2 components, CF(1) - the catalytic core - and CF(0) - the membrane proton channel. CF(1) has five subunits: alpha(3), beta(3), gamma(1), delta(1), epsilon(1). CF(0) has three main subunits: a(1), b(2) and c(9-12). The alpha and beta chains form an alternating ring which encloses part of the gamma chain. CF(1) is attached to CF(0) by a central stalk formed by the gamma and epsilon chains, while a peripheral stalk is formed by the delta and b chains.

Its subcellular location is the cell membrane. The catalysed reaction is ATP + H2O + 4 H(+)(in) = ADP + phosphate + 5 H(+)(out). Its function is as follows. Produces ATP from ADP in the presence of a proton gradient across the membrane. The alpha chain is a regulatory subunit. This is ATP synthase subunit alpha from Lactobacillus delbrueckii subsp. bulgaricus (strain ATCC BAA-365 / Lb-18).